Here is a 326-residue protein sequence, read N- to C-terminus: Eukaryotic translation initiation factor 3 subunit I (326 aa).

5 WD repeats span residues 8-47, 50-89, 145-184, 188-227, and 285-326; these read GHERSITQIKYNREGDLLFSSSKDQKPNVWYSLNGERLGT, GHQGAVWCLDVDWESRKLITGAGDMTTKLWDVEYGTVIAS, MVESKITSMQWGPLDETIITGHDNGNIAIWDVRKGQKVVD, DHAAGINDMQLSKDGTMFVTASKDNTAKLFDAESLMCLKT, and GHFG…NIFE.

It belongs to the eIF-3 subunit I family. Component of the eukaryotic translation initiation factor 3 (eIF-3) complex. The eIF-3 complex interacts with pix.

The protein localises to the cytoplasm. Component of the eukaryotic translation initiation factor 3 (eIF-3) complex, which is involved in protein synthesis of a specialized repertoire of mRNAs and, together with other initiation factors, stimulates binding of mRNA and methionyl-tRNAi to the 40S ribosome. The eIF-3 complex specifically targets and initiates translation of a subset of mRNAs involved in cell proliferation. The sequence is that of Eukaryotic translation initiation factor 3 subunit I from Drosophila grimshawi (Hawaiian fruit fly).